The following is a 271-amino-acid chain: ATP synthase subunit a (271 aa).

5 helical membrane passes run 47–67, 107–127, 133–153, 209–229, and 235–255; these read WENIIFAILVASLISLVAYLG, FLGTLFIYIFTMNIFGMVPLM, SLNITAALAICVFCLVQFLNI, ILIGTFALMGVVMISSVETFV, and LPFMFLGLLTSFMQALVFTLL.

This sequence belongs to the ATPase A chain family. As to quaternary structure, F-type ATPases have 2 components, CF(1) - the catalytic core - and CF(0) - the membrane proton channel. CF(1) has five subunits: alpha(3), beta(3), gamma(1), delta(1), epsilon(1). CF(0) has three main subunits: a(1), b(2) and c(9-12). The alpha and beta chains form an alternating ring which encloses part of the gamma chain. CF(1) is attached to CF(0) by a central stalk formed by the gamma and epsilon chains, while a peripheral stalk is formed by the delta and b chains.

It localises to the cell inner membrane. Its function is as follows. Key component of the proton channel; it plays a direct role in the translocation of protons across the membrane. This Protochlamydia amoebophila (strain UWE25) protein is ATP synthase subunit a.